We begin with the raw amino-acid sequence, 667 residues long: Homeobox protein 3 (667 aa).

4 disordered regions span residues 44–108 (FFQP…NSSI), 179–232 (NNNN…TVYN), 249–268 (NNNN…VNNN), and 331–418 (STNK…YQKQ). Over residues 52 to 63 (LPPPTNQQPQPQ) the composition is skewed to pro residues. Residues 75 to 96 (CNSSFENSPQQPTSPLLISSQT) show a composition bias toward polar residues. Low complexity predominate over residues 97-108 (SYPSDLSSNSSI). A compositionally biased stretch (basic residues) spans 334-343 (KRMKISHHSH). Positions 344-379 (SLSNNNENSLSQPYFNNNNNNNNENENVYNIVNEQN) are enriched in low complexity. The segment covering 380–390 (PTFNPNQSNTH) has biased composition (polar residues). A coiled-coil region spans residues 386–454 (QSNTHQQQEE…ENENVICSEF (69 aa)). The homeobox DNA-binding region spans 602 to 664 (EFKSRRILSE…NKRMRDKSNK (63 aa)).

It is found in the nucleus. Functionally, putative transcription factor. The protein is Homeobox protein 3 (hbx3) of Dictyostelium discoideum (Social amoeba).